Here is a 180-residue protein sequence, read N- to C-terminus: MNKPTLGIDLDTTLNTLDREWVKRYNEIYKDKLLPSDIKGWDIENYVKPECGKKIYDILKEPHFFRNLGVQPFAETALEELTSIFNIYIVSATHYKVCEDKGNWIKEKFPFISYQNIIFCHNKGLVHLDILIDDNPLNLENFKGNKILFDAHHNKSENRFVRARDWYEAKALCESLKDFL.

Aspartate 9 (nucleophile) is an active-site residue. 3 residues coordinate Mg(2+): aspartate 9, aspartate 11, and aspartate 134. Aspartate 11 serves as the catalytic Proton donor.

This sequence belongs to the 5'(3')-deoxyribonucleotidase family. It depends on Mg(2+) as a cofactor.

In terms of biological role, dephosphorylates nucleoside monophosphates such as the 5' and 2'(3')-phosphates of deoxyribonucleotides in vitro. The sequence is that of 5'(3')-deoxyribonucleotidase from Clostridium acetobutylicum (strain ATCC 824 / DSM 792 / JCM 1419 / IAM 19013 / LMG 5710 / NBRC 13948 / NRRL B-527 / VKM B-1787 / 2291 / W).